The chain runs to 142 residues: MVLSAADKTNVKAAWSKVGGHAGEYGAEALERMFLGFPTTKTYFPHFDLSHGSAQVKAHGKKVGDALTLAVGHLDDLPGALSNLSDLHAHKLRVDPVNFKLLSHCLLSTLAVHLPNDFTPAVHASLDKFLSSVSTVLTSKYR.

The 141-residue stretch at Val2–Arg142 folds into the Globin domain. At Ser4 the chain carries Phosphoserine. At Lys8 the chain carries N6-succinyllysine. Thr9 is modified (phosphothreonine). N6-succinyllysine is present on Lys12. An N6-acetyllysine; alternate modification is found at Lys17. At Lys17 the chain carries N6-succinyllysine; alternate. Tyr25 bears the Phosphotyrosine mark. Lys41 carries the post-translational modification N6-succinyllysine. Phosphoserine is present on Ser50. His59 lines the O2 pocket. His88 is a heme b binding site. Ser103 carries the phosphoserine modification. Thr109 carries the post-translational modification Phosphothreonine. Phosphoserine is present on residues Ser125 and Ser132. Phosphothreonine is present on residues Thr135 and Thr138. A Phosphoserine modification is found at Ser139.

It belongs to the globin family. In terms of assembly, heterotetramer of two alpha chains and two beta chains. As to expression, red blood cells.

Involved in oxygen transport from the lung to the various peripheral tissues. Its function is as follows. Hemopressin acts as an antagonist peptide of the cannabinoid receptor CNR1. Hemopressin-binding efficiently blocks cannabinoid receptor CNR1 and subsequent signaling. This Equus caballus (Horse) protein is Hemoglobin subunit alpha (HBA).